The sequence spans 44 residues: Large ribosomal subunit protein bL34 (44 aa).

This sequence belongs to the bacterial ribosomal protein bL34 family.

This Buchnera aphidicola subsp. Cinara cedri (strain Cc) protein is Large ribosomal subunit protein bL34.